We begin with the raw amino-acid sequence, 154 residues long: PHA granule-associated protein PhaP (154 aa).

It localises to the cytoplasmic granule. Polyhydroxyalkanoate (PHA) granule structural protein. Important for PHA granule formation and separation, and for cell growth. This chain is PHA granule-associated protein PhaP (phaP), found in Haloferax mediterranei (strain ATCC 33500 / DSM 1411 / JCM 8866 / NBRC 14739 / NCIMB 2177 / R-4) (Halobacterium mediterranei).